A 254-amino-acid polypeptide reads, in one-letter code: Ribosomal RNA large subunit methyltransferase E (254 aa).

The tract at residues 1 to 28 (MTTPPRGPDGRPLKVRVKKSRGRTTSSQ) is disordered. Residues 13 to 22 (LKVRVKKSRG) are compositionally biased toward basic residues. S-adenosyl-L-methionine-binding residues include G80, W82, D103, D119, and D143. The Proton acceptor role is filled by K183. The tract at residues 231–254 (DRAETDDAGTDGTGTAEAQAPRDQ) is disordered.

Belongs to the class I-like SAM-binding methyltransferase superfamily. RNA methyltransferase RlmE family.

Its subcellular location is the cytoplasm. The catalysed reaction is uridine(2552) in 23S rRNA + S-adenosyl-L-methionine = 2'-O-methyluridine(2552) in 23S rRNA + S-adenosyl-L-homocysteine + H(+). Functionally, specifically methylates the uridine in position 2552 of 23S rRNA at the 2'-O position of the ribose in the fully assembled 50S ribosomal subunit. This is Ribosomal RNA large subunit methyltransferase E from Xanthobacter autotrophicus (strain ATCC BAA-1158 / Py2).